The sequence spans 404 residues: Protrudin (404 aa).

The segment at 1–20 is disordered; that stretch reads MQTSEREGCGPEVSPSTVPE. Over 1 to 66 the chain is Cytoplasmic; it reads MQTSEREGCG…AGDGVRYLLR (66 aa). A sufficient for homooligomerization region spans residues 1–92; that stretch reads MQTSEREGCG…LFLTLNEGAW (92 aa). Residues 1–205 are sufficient for localization to endoplasmic reticulum tubular network and for interactions with REEP1, REEP5, ATL1, ATL2, ATL3 and SPAST; it reads MQTSEREGCG…LYLLPLCWVL (205 aa). Residues 51 to 64 are necessary for interaction with RAB11A and function in neurite outgrowth; it reads LEPLKDAGDGVRYL. Residues 67 to 87 form a helical membrane-spanning segment; that stretch reads WQTPLCSLLTCLGLNVLFLTL. N88 is a topological domain (lumenal). The chain crosses the membrane as a helical span at residues 89-109; the sequence is EGAWYSVGALMISVPALLGYL. The Cytoplasmic segment spans residues 110–187; it reads QEGCQARLSE…NPAVSSQFYG (78 aa). Residues 188–208 constitute an intramembrane region (helical); the sequence is ALLGTVCMLYLLPLCWVLALL. Topologically, residues 209-404 are cytoplasmic; the sequence is NSTLFLGNVE…CASCNQTLSK (196 aa). Residues 234-286 are disordered; the sequence is MNPKQEESAFESPPPSDAGGKGALVDCTPAPTPTEDLTPGSVEEAEEAEPDEE. The necessary for interaction with KIF5A stretch occupies residues 271-354; it reads TPGSVEEAEE…GCSATFSVLK (84 aa). Residues 276–286 show a composition bias toward acidic residues; the sequence is EEAEEAEPDEE. Residues 286–292 form a necessary for interaction with VAPA region; sequence EFKDAIE. The FYVE-type zinc finger occupies 337-403; the sequence is TNNYGSCTGC…VCASCNQTLS (67 aa). Zn(2+)-binding residues include C343, C346, C359, C362, C367, C370, C395, and C398.

In terms of assembly, can form homooligomers (monomers, dimers and tetramers). Interacts with RAB11A (GDP-bound form); regulates RAB11A. Interacts with FKBP8; may negatively regulate ZFYVE27 phosphorylation. Interacts with VAPA (via MSP domain); may regulate ZFYVE27 retention in the endoplasmic reticulum and its function in cell projections formation. Interacts with VAPB (via MSP domain). Interacts with RAB11B (GDP-bound form), REEP1, REEP5, ATL1, ATL2, ATL3, SPAST, SURF4, KIF5A, KIF5B, KIF5C and RTN3. In terms of processing, phosphorylated. Phosphorylation is induced by NGF through the MAPK/ERK pathway and modulates interaction with RAB11A.

The protein localises to the recycling endosome membrane. Its subcellular location is the endoplasmic reticulum membrane. The protein resides in the cell projection. It is found in the growth cone membrane. In terms of biological role, key regulator of RAB11-dependent vesicular trafficking during neurite extension through polarized membrane transport. Promotes axonal elongation and contributes to the establishment of neuronal cell polarity. Involved in nerve growth factor-induced neurite formation in VAPA-dependent manner. Contributes to both the formation and stabilization of the tubular ER network. Involved in ER morphogenesis by regulating the sheet-to-tubule balance and possibly the density of tubule interconnections. Acts as an adapter protein that facilitates the interaction of KIF5A with VAPA, VAPB, SURF4, RAB11A, RAB11B and RTN3 and the ZFYVE27-KIF5A complex contributes to the transport of these proteins in neurons. Can induce formation of neurite-like membrane protrusions in non-neuronal cells in a KIF5A/B-dependent manner. The chain is Protrudin (ZFYVE27) from Bos taurus (Bovine).